Consider the following 122-residue polypeptide: Large ribosomal subunit protein uL29A (122 aa).

Residues 10-69 (QLGIKQIEERAAEIKADLAALRQKKNSGDVGANDIKTAKKNLARALTVRREKILEELVEA) adopt a coiled-coil conformation.

This sequence belongs to the universal ribosomal protein uL29 family. In terms of assembly, component of the large ribosomal subunit.

It localises to the cytoplasm. The sequence is that of Large ribosomal subunit protein uL29A (RPL35A) from Encephalitozoon cuniculi (strain GB-M1) (Microsporidian parasite).